Here is a 257-residue protein sequence, read N- to C-terminus: Ribonuclease HII (257 aa).

One can recognise an RNase H type-2 domain in the interval 72–257; the sequence is TYIAGIDEVG…FAPIKDMIKK (186 aa). Positions 78, 79, and 170 each coordinate a divalent metal cation.

The protein belongs to the RNase HII family. Mn(2+) serves as cofactor. Mg(2+) is required as a cofactor.

It is found in the cytoplasm. It catalyses the reaction Endonucleolytic cleavage to 5'-phosphomonoester.. Endonuclease that specifically degrades the RNA of RNA-DNA hybrids. This is Ribonuclease HII from Bacillus anthracis (strain A0248).